The chain runs to 907 residues: Translation initiation factor IF-2 (907 aa).

The segment at 26-317 is disordered; sequence DAGMKKSSSD…KPKSMQHGFD (292 aa). Composition is skewed to basic and acidic residues over residues 28–44 and 101–248; these read GMKK…EKQK and SAIE…DTDY. Positions 299–308 are enriched in basic residues; that stretch reads KGGRKGKLSK. Residues 406–575 enclose the tr-type G domain; it reads PRAPVVTIMG…LLQAEVLELT (170 aa). The G1 stretch occupies residues 415-422; it reads GHVDHGKT. A GTP-binding site is contributed by 415 to 422; sequence GHVDHGKT. The tract at residues 440–444 is G2; it reads GITQH. The G3 stretch occupies residues 461–464; the sequence is DTPG. Residues 461-465 and 515-518 contribute to the GTP site; these read DTPGH and NKID. The interval 515-518 is G4; the sequence is NKID. The segment at 551-553 is G5; it reads SAK.

It belongs to the TRAFAC class translation factor GTPase superfamily. Classic translation factor GTPase family. IF-2 subfamily.

Its subcellular location is the cytoplasm. In terms of biological role, one of the essential components for the initiation of protein synthesis. Protects formylmethionyl-tRNA from spontaneous hydrolysis and promotes its binding to the 30S ribosomal subunits. Also involved in the hydrolysis of GTP during the formation of the 70S ribosomal complex. This is Translation initiation factor IF-2 from Vibrio vulnificus (strain CMCP6).